Reading from the N-terminus, the 422-residue chain is Protein phosphatase 1 regulatory subunit 36 (422 aa).

Interacts with PPP1CA.

Functionally, inhibits phosphatase activity of protein phosphatase 1 (PP1) complexes. The polypeptide is Protein phosphatase 1 regulatory subunit 36 (PPP1R36) (Homo sapiens (Human)).